Reading from the N-terminus, the 495-residue chain is ATP synthase subunit beta, chloroplastic (495 aa).

172-179 (GGAGVGKT) is a binding site for ATP.

The protein belongs to the ATPase alpha/beta chains family. In terms of assembly, F-type ATPases have 2 components, CF(1) - the catalytic core - and CF(0) - the membrane proton channel. CF(1) has five subunits: alpha(3), beta(3), gamma(1), delta(1), epsilon(1). CF(0) has four main subunits: a(1), b(1), b'(1) and c(9-12).

Its subcellular location is the plastid. The protein resides in the chloroplast thylakoid membrane. The catalysed reaction is ATP + H2O + 4 H(+)(in) = ADP + phosphate + 5 H(+)(out). Its function is as follows. Produces ATP from ADP in the presence of a proton gradient across the membrane. The catalytic sites are hosted primarily by the beta subunits. The chain is ATP synthase subunit beta, chloroplastic from Convallaria majalis (Lily of the valley).